The following is an 85-amino-acid chain: Large ribosomal subunit protein bL27 (85 aa).

The disordered stretch occupies residues methionine 1–leucine 21.

The protein belongs to the bacterial ribosomal protein bL27 family.

The chain is Large ribosomal subunit protein bL27 from Nitratiruptor sp. (strain SB155-2).